A 612-amino-acid polypeptide reads, in one-letter code: uncharacterized protein (612 aa).

Disordered regions lie at residues Gln-46–Pro-113, Gln-129–Tyr-185, Thr-313–Met-360, Phe-457–Gly-488, and Asn-593–Ile-612. The span at His-58–Asn-102 shows a compositional bias: low complexity. 2 stretches are compositionally biased toward polar residues: residues Gly-103–Pro-113 and Gln-129–Gln-138. Positions Ile-143–Ile-169 are enriched in low complexity. Residues Gly-175–Tyr-185 are compositionally biased toward polar residues. Residues Thr-323–Thr-359 are compositionally biased toward low complexity.

This is an uncharacterized protein from Dictyostelium discoideum (Social amoeba).